Here is a 600-residue protein sequence, read N- to C-terminus: Polypeptide N-acetylgalactosaminyltransferase (600 aa).

Over 1–7 (MVRRKLR) the chain is Cytoplasmic. The chain crosses the membrane as a helical; Signal-anchor for type II membrane protein span at residues 8 to 28 (LLVILAGIWLVGIVVYLFKGD). The Lumenal portion of the chain corresponds to 29 to 600 (DQSEFEKRVI…KWTFSLSKNR (572 aa)). 5 disulfide bridges follow: Cys154–Cys382, Cys373–Cys451, Cys484–Cys501, Cys524–Cys541, and Cys567–Cys583. The segment at 163-268 (LPDTSVIITF…EKWLEPLLDR (106 aa)) is catalytic subdomain A. The substrate site is built by Thr171, Asp204, and Arg229. Asp252 is a Mn(2+) binding site. Ser253 is a substrate binding site. His254 is a Mn(2+) binding site. The catalytic subdomain B stretch occupies residues 328-390 (PIRTPMIAGG…PCSRVGHVFR (63 aa)). Residue Trp359 coordinates substrate. His387 is a Mn(2+) binding site. Substrate is bound by residues Arg390, His393, and Tyr395. One can recognise a Ricin B-type lectin domain in the interval 466–595 (KIPSVQDIAF…SSYTQKWTFS (130 aa)).

This sequence belongs to the glycosyltransferase 2 family. GalNAc-T subfamily. Mn(2+) serves as cofactor. In terms of processing, O-glycosylated.

Its subcellular location is the golgi apparatus membrane. It carries out the reaction L-seryl-[protein] + UDP-N-acetyl-alpha-D-galactosamine = a 3-O-[N-acetyl-alpha-D-galactosaminyl]-L-seryl-[protein] + UDP + H(+). The catalysed reaction is L-threonyl-[protein] + UDP-N-acetyl-alpha-D-galactosamine = a 3-O-[N-acetyl-alpha-D-galactosaminyl]-L-threonyl-[protein] + UDP + H(+). It participates in protein modification; protein glycosylation. With respect to regulation, no change in activity by addition of up to 10% methanol or glycerol, or 5% acetonitrile. 40% reduction in activity by 10% acetonitrile or by lyophilization. Activity requires divalent cations, the best being Mn(2+) (10-20 mM), followed by Co(2+), Mg(2+) and Ca(2+). Loss of activity with Cu(2+) or in the presence of EDTA. Inhibited by UDP, but not by UMP, UTP, ADP or GDP nucleotides. No inhibition by galactose, N-acetylglucosamine or N-acetylgalactosamine sugars. In terms of biological role, catalyzes the initial reaction in O-linked oligosaccharide biosynthesis, the transfer of an N-acetyl-D-galactosamine residue to a serine or threonine residue on the protein receptor. Has a broad substrate specificity. Acceptor peptides include Muc2, Muc5Ac, Muc1a and Muc1a', with Muc2 as the best acceptor. Acts on non-glycosylated and mono- or multi-glycosylated peptide substrates. Transfers preferably to threonine rather than serine residue. Thr-15 is the most preferred site of glycosylation in Muc2 peptide PTTTPITTTTTVTPTPTPTGTQTK having proline residues at position -1, and at positions +1 and +3, where the number represents the distance from the C-terminal and N-terminal hydroxyl amino acid, respectively. Transfer of the N-acetyl-D-galactosamine (GalNAc) is optimal with proline residues at positions -3, -1, +1 and +3, but other amino acids are tolerated, although some, such as phenylalanine, isoleucine or leucine at -1, or lysine at +3 prevent the transfer completely. Second GalNAc is transferred to Muc2 Thr-2 or Thr-13, both of which have two proline residues nearby. Up to nine sites can be glycosylated within Muc2, but eight are used simultaneously since Thr-19 and Thr-21 are not detected to be glycosylated at the same time. Glycosylation is not detected of a potential site, which is next to an already glycosylated site, but only one amino acid is needed in between two glycosylation sites. Ser-5 is the preferred glycosylation site in Muc5Ac peptide GTTPSPVPTTSTTSAP into which up to four GalNAcs can be attached. Only the threonine residues are detected as pontential glycosylation sites in Muc1a APPAHGVTSAPDTRPAPGC and Muc1a' AHGVTSAPDTR peptides. Transferase activity is restricted to UDP-GalNAc as a donor, and none of the nucleotide sugars UDP-Gal, UDP-GlcNAc, GDP-fucose, UDP-xylose, UDP-glucuronic acid or CMP-neuraminic acid are utilized as donors. This chain is Polypeptide N-acetylgalactosaminyltransferase, found in Biomphalaria glabrata (Bloodfluke planorb).